The sequence spans 155 residues: IFN signaling evasion protein OPG029 (155 aa).

Belongs to the orthopoxvirus OPG029 family. In terms of assembly, interacts with host TANK, TBKBP1 and AZI2; these interactions prevent interferon production. Interacts with host STAT2.

Functionally, prevents establishment of cellular antiviral state by blocking virus-induced phosphorylation and activation of interferon regulatory factors 3/IRF3 and 7/IRF7, transcription factors critical for the induction of interferons alpha and beta. This blockage is produced through the inhibition of host TBK1, by binding host TBK1 adapter proteins TBKBP1 and AZI2, thereby producing a strong inhibition of the phosphorylation and activation of IRF3 and IRF7. Also acts as an inhibitor of the cellular response to type I IFN by interacting with host STAT2. Mechanistically, exerts its inhibitory effect after host ISGF3 complex (composed of STAT1, STAT2 and IRF9) binding to the interferon stimulated response element (ISRE). The polypeptide is IFN signaling evasion protein OPG029 (OPG019) (Cynomys gunnisoni (Gunnison's prairie dog)).